We begin with the raw amino-acid sequence, 123 residues long: Fluoride-specific ion channel FluC (123 aa).

4 helical membrane passes run 5 to 25 (VWVA…YKFV), 33 to 53 (LATF…IGAF), 62 to 82 (LKLA…TFAA), and 94 to 114 (ITAF…VALG). Positions 72 and 75 each coordinate Na(+).

It belongs to the fluoride channel Fluc/FEX (TC 1.A.43) family.

It is found in the cell inner membrane. It catalyses the reaction fluoride(in) = fluoride(out). Na(+) is not transported, but it plays an essential structural role and its presence is essential for fluoride channel function. Its function is as follows. Fluoride-specific ion channel. Important for reducing fluoride concentration in the cell, thus reducing its toxicity. The polypeptide is Fluoride-specific ion channel FluC (Ignicoccus hospitalis (strain KIN4/I / DSM 18386 / JCM 14125)).